A 259-amino-acid polypeptide reads, in one-letter code: Protein CDI (259 aa).

The stretch at 236 to 259 (FADLWLNEMEEYNKENKKEADNAK) forms a coiled coil.

Mostly expressed in pollen grains and pollen tubes, and, at low levels, in seedlings, roots, stems, leaves, flowers and siliques.

It localises to the cytoplasm. The protein resides in the cytosol. Probable nucleotide-diphospho-sugar transferase required for pollen germination and tube growth. The polypeptide is Protein CDI (Arabidopsis thaliana (Mouse-ear cress)).